Consider the following 613-residue polypeptide: Zinc finger CCCH domain-containing protein 59 (613 aa).

Residues 275–296 (NTTLSPYISPAKSVPVEETPKR) form a disordered region. C3H1-type zinc fingers lie at residues 318–346 (AGGN…HDEE) and 350–378 (HYNR…HSLS).

In Oryza sativa subsp. japonica (Rice), this protein is Zinc finger CCCH domain-containing protein 59.